Reading from the N-terminus, the 448-residue chain is NADH oxidase (448 aa).

Residues 7-11 (GSGAA), Cys42, Val80, 110-113 (ATGA), and Arg132 each bind FAD. Cys42 acts as the Redox-active in catalysis. NAD(+) is bound by residues 152 to 167 (VAVV…MAYG), Glu179, and Gly243. Residues 271–281 (TSIPNIYAVGD), Gly299, and Thr300 each bind FAD. Val328 provides a ligand contact to NAD(+). FAD is bound at residue Tyr423.

The protein belongs to the class-III pyridine nucleotide-disulfide oxidoreductase family. Requires FAD as cofactor.

The enzyme catalyses 2 NADH + O2 + 2 H(+) = 2 NAD(+) + 2 H2O. Its function is as follows. Catalyzes the four-electron reduction of molecular oxygen to water. The protein is NADH oxidase of Methanocaldococcus jannaschii (strain ATCC 43067 / DSM 2661 / JAL-1 / JCM 10045 / NBRC 100440) (Methanococcus jannaschii).